Here is a 211-residue protein sequence, read N- to C-terminus: Thiamine-phosphate synthase (211 aa).

Residues 36 to 40 (QLREK) and asparagine 68 each bind 4-amino-2-methyl-5-(diphosphooxymethyl)pyrimidine. Positions 69 and 88 each coordinate Mg(2+). Serine 107 lines the 4-amino-2-methyl-5-(diphosphooxymethyl)pyrimidine pocket. 2-[(2R,5Z)-2-carboxy-4-methylthiazol-5(2H)-ylidene]ethyl phosphate is bound at residue 133–135 (TGS). Residue lysine 136 coordinates 4-amino-2-methyl-5-(diphosphooxymethyl)pyrimidine. 2-[(2R,5Z)-2-carboxy-4-methylthiazol-5(2H)-ylidene]ethyl phosphate contacts are provided by residues glycine 167 and 187-188 (IT).

Belongs to the thiamine-phosphate synthase family. Mg(2+) serves as cofactor.

The catalysed reaction is 2-[(2R,5Z)-2-carboxy-4-methylthiazol-5(2H)-ylidene]ethyl phosphate + 4-amino-2-methyl-5-(diphosphooxymethyl)pyrimidine + 2 H(+) = thiamine phosphate + CO2 + diphosphate. It catalyses the reaction 2-(2-carboxy-4-methylthiazol-5-yl)ethyl phosphate + 4-amino-2-methyl-5-(diphosphooxymethyl)pyrimidine + 2 H(+) = thiamine phosphate + CO2 + diphosphate. The enzyme catalyses 4-methyl-5-(2-phosphooxyethyl)-thiazole + 4-amino-2-methyl-5-(diphosphooxymethyl)pyrimidine + H(+) = thiamine phosphate + diphosphate. It participates in cofactor biosynthesis; thiamine diphosphate biosynthesis; thiamine phosphate from 4-amino-2-methyl-5-diphosphomethylpyrimidine and 4-methyl-5-(2-phosphoethyl)-thiazole: step 1/1. In terms of biological role, condenses 4-methyl-5-(beta-hydroxyethyl)thiazole monophosphate (THZ-P) and 2-methyl-4-amino-5-hydroxymethyl pyrimidine pyrophosphate (HMP-PP) to form thiamine monophosphate (TMP). The chain is Thiamine-phosphate synthase from Haloarcula marismortui (strain ATCC 43049 / DSM 3752 / JCM 8966 / VKM B-1809) (Halobacterium marismortui).